Reading from the N-terminus, the 331-residue chain is Geranylgeranyl transferase type-2 subunit beta (331 aa).

Residue glycine 2 is modified to N-acetylglycine. Threonine 3 carries the post-translational modification Phosphothreonine. PFTB repeat units lie at residues leucine 20–glycine 61, arginine 68–aspartate 109, isoleucine 116–glycine 157, valine 164–serine 205, serine 212–glycine 253, and arginine 260–glycine 302. Residue histidine 190–glycine 192 participates in geranylgeranyl diphosphate binding. Residues aspartate 238 and cysteine 240 each coordinate Zn(2+). Geranylgeranyl diphosphate is bound at residue tyrosine 241–tryptophan 244. Residue histidine 290 participates in Zn(2+) binding.

Belongs to the protein prenyltransferase subunit beta family. Heterotrimer composed of RABGGTA, RABGGTB and CHM; within this trimer, RABGGTA and RABGGTB form the catalytic component B, while CHM (component A) mediates peptide substrate binding. The Rab GGTase dimer (RGGT) interacts with CHM (component A) prior to Rab protein binding; the association is stabilized by geranylgeranyl pyrophosphate (GGpp). The CHM:RGGT:Rab complex is destabilized by GGpp. Interaction of RABGGTB with prenylated PTP4A2 precludes its association with RABGGTA and inhibits enzyme activity. Interacts with CHODL. Interacts with non-phosphorylated form of RAB8A; phosphorylation of RAB8A at 'Thr-72' disrupts this interaction. Requires Zn(2+) as cofactor.

It catalyses the reaction geranylgeranyl diphosphate + L-cysteinyl-[protein] = S-geranylgeranyl-L-cysteinyl-[protein] + diphosphate. The enzymatic reaction requires the aid of a Rab escort protein (also called component A). Catalyzes the transfer of a geranylgeranyl moiety from geranylgeranyl diphosphate to both cysteines of Rab proteins with the C-terminal sequence -XXCC, -XCXC and -CCXX, such as RAB1A, RAB3A, RAB5A and RAB7A. This is Geranylgeranyl transferase type-2 subunit beta (RABGGTB) from Bos taurus (Bovine).